Reading from the N-terminus, the 61-residue chain is Small ribosomal subunit protein bS21 (61 aa).

A disordered region spans residues 36–61 (EHYESPSVKRKKKAEAARKRKYKYGR). The segment covering 43 to 61 (VKRKKKAEAARKRKYKYGR) has biased composition (basic residues).

This sequence belongs to the bacterial ribosomal protein bS21 family.

The protein is Small ribosomal subunit protein bS21 (rpsU) of Caldanaerobacter subterraneus subsp. tengcongensis (strain DSM 15242 / JCM 11007 / NBRC 100824 / MB4) (Thermoanaerobacter tengcongensis).